The primary structure comprises 524 residues: FAD-dependent monooxygenase opdD (524 aa).

Residues Glu-48 and Arg-145 each contribute to the FAD site.

The protein belongs to the paxM FAD-dependent monooxygenase family.

Its pathway is secondary metabolite biosynthesis. Its function is as follows. FAD-dependent monooxygenase; part of the gene cluster that mediates the biosynthesis of oxopyrrolidines, polyketide-amino acid hybrid compounds with feature structures of tetramic acid. Does not seem to play a role in oxopyrrolidines A and B biosynthesis. May be involved in further modifications of these oxopyrrolidines. The sequence is that of FAD-dependent monooxygenase opdD from Penicillium oxalicum (strain 114-2 / CGMCC 5302) (Penicillium decumbens).